Here is a 206-residue protein sequence, read N- to C-terminus: MARYLGPKCKLSRREGTDLFLKSGVKANDEKCKMNTAPGQHGARRARLSDYGLQLREKQKVRRMYGILEGQFKKYYVEASRRKGNTGATLLELLESRLDNVVYRMGFAATRAEARQLVVHKGIMVNGHTCNVPSAQVKAGDVVAVREKAKKQLRIQNAVELAKHRKELSWIDVNTDSLEGTMKSSPDRSELSADINEQLIIELYSK.

The region spanning 96–158 is the S4 RNA-binding domain; that stretch reads SRLDNVVYRM…AKKQLRIQNA (63 aa).

This sequence belongs to the universal ribosomal protein uS4 family. As to quaternary structure, part of the 30S ribosomal subunit. Contacts protein S5. The interaction surface between S4 and S5 is involved in control of translational fidelity.

In terms of biological role, one of the primary rRNA binding proteins, it binds directly to 16S rRNA where it nucleates assembly of the body of the 30S subunit. Its function is as follows. With S5 and S12 plays an important role in translational accuracy. The protein is Small ribosomal subunit protein uS4 of Francisella tularensis subsp. tularensis (strain FSC 198).